The chain runs to 398 residues: Elongation factor Tu (398 aa).

Positions 10 to 207 (KIHLNVGTIG…ILDKNIPVPN (198 aa)) constitute a tr-type G domain. The segment at 19 to 26 (GHVDHGKT) is G1. 19 to 26 (GHVDHGKT) is a GTP binding site. Position 26 (threonine 26) interacts with Mg(2+). A G2 region spans residues 60–64 (GITIS). Positions 81 to 84 (DCPG) are G3. Residues 81 to 85 (DCPGH) and 136 to 139 (NKAD) each bind GTP. Residues 136–139 (NKAD) are G4. The G5 stretch occupies residues 174–176 (SAL).

Belongs to the TRAFAC class translation factor GTPase superfamily. Classic translation factor GTPase family. EF-Tu/EF-1A subfamily. Monomer.

The protein resides in the cytoplasm. It catalyses the reaction GTP + H2O = GDP + phosphate + H(+). In terms of biological role, GTP hydrolase that promotes the GTP-dependent binding of aminoacyl-tRNA to the A-site of ribosomes during protein biosynthesis. The chain is Elongation factor Tu from Carsonella ruddii (strain PV).